Consider the following 241-residue polypeptide: MSQVKYKRIILKVSGEALAGEKGTGINPEVIKHLAEEIKSVHDMGVEIGIVCGGGNMWRGETGANLGMERAQADYMGMLATIMNGLALQDGLENLGVPTRVQTSIEMRQIAEPYIRRKAVRHLEKGRVVIFGGGTGNPYFSTDTTAALRAAEINADVILMAKNGVDGVYSADPKVDPNAKKYSELTQLDLISKNLKVMDSTASSLSMDNNIPLVVFNVNKPGNIKKVVMGENIGTVIKGDK.

12 to 15 (KVSG) contacts ATP. The segment at 20–25 (GEKGTG) is involved in allosteric activation by GTP. Residue glycine 54 participates in UMP binding. Glycine 55 and arginine 59 together coordinate ATP. UMP-binding positions include aspartate 74 and 135 to 142 (TGNPYFST). ATP contacts are provided by asparagine 163, tyrosine 169, and aspartate 172.

It belongs to the UMP kinase family. In terms of assembly, homohexamer.

It localises to the cytoplasm. It catalyses the reaction UMP + ATP = UDP + ADP. It participates in pyrimidine metabolism; CTP biosynthesis via de novo pathway; UDP from UMP (UMPK route): step 1/1. Allosterically activated by GTP. Inhibited by UTP. In terms of biological role, catalyzes the reversible phosphorylation of UMP to UDP. This Lactobacillus johnsonii (strain CNCM I-12250 / La1 / NCC 533) protein is Uridylate kinase.